Reading from the N-terminus, the 499-residue chain is Putative sperm motility kinase W (499 aa).

In terms of domain architecture, Protein kinase spans 14–262 (YKVLFTLGHG…IEDIERHPWV (249 aa)). ATP contacts are provided by residues 20 to 28 (LGHGSFGTV) and Lys-43. Asp-133 serves as the catalytic Proton acceptor. The region spanning 274–314 (DPDYNIIEMLCGMGFDANEILESLQRKKYNESMGAYLILKA) is the UBA domain.

It belongs to the protein kinase superfamily. CAMK Ser/Thr protein kinase family. Smok subfamily.

The catalysed reaction is L-seryl-[protein] + ATP = O-phospho-L-seryl-[protein] + ADP + H(+). The enzyme catalyses L-threonyl-[protein] + ATP = O-phospho-L-threonyl-[protein] + ADP + H(+). May play a role in sperm motility, especially in the regulation of flagellar function. The protein is Putative sperm motility kinase W of Mus musculus (Mouse).